We begin with the raw amino-acid sequence, 363 residues long: MPVLLDPENALALDVLLAGTDAQGLDWHLSAPDAADLPRIRGIGTLSSAGNEEISFLSNPRYQNQLATTRAAAVIVTPDVAQARQEQGASGHVLVVCKHPYLLYARLAQWFERASRPAGPAGVHPSAVVDPSAEIDADARVGAQCVIEAGARIGRGARLGPGCVIGAGSTVGADSLLHPRVTLYAGVHVGERAIIHSGAVLGADGFGFAPDPTLGRGAWGKIPQLGGVRVGNDVEIGANTTIDRGALDDTIVGDGVKLDNQIMVAHNVRIGAHTAIAACVGIAGSTTIGERCTIGGASMLSGHLAIADDVNISGGTAVTSNIAKAGRYTGVYPYAEHSEWQRNAAVIQQLALLRRRLRALERE.

The active-site Proton acceptor is the His-266.

This sequence belongs to the transferase hexapeptide repeat family. LpxD subfamily. As to quaternary structure, homotrimer.

The catalysed reaction is a UDP-3-O-[(3R)-3-hydroxyacyl]-alpha-D-glucosamine + a (3R)-hydroxyacyl-[ACP] = a UDP-2-N,3-O-bis[(3R)-3-hydroxyacyl]-alpha-D-glucosamine + holo-[ACP] + H(+). Its pathway is bacterial outer membrane biogenesis; LPS lipid A biosynthesis. Catalyzes the N-acylation of UDP-3-O-acylglucosamine using 3-hydroxyacyl-ACP as the acyl donor. Is involved in the biosynthesis of lipid A, a phosphorylated glycolipid that anchors the lipopolysaccharide to the outer membrane of the cell. The polypeptide is UDP-3-O-acylglucosamine N-acyltransferase (Bordetella parapertussis (strain 12822 / ATCC BAA-587 / NCTC 13253)).